The following is a 645-amino-acid chain: Sodium-dependent phosphate transporter 2 (645 aa).

Residues Met1 to Glu5 are Extracellular-facing. A helical membrane pass occupies residues Tyr6–Ala26. The Cytoplasmic segment spans residues Asn27–Gln46. Residues Ala47–Gly67 form a helical membrane-spanning segment. Residues Glu68–Thr86 are Extracellular-facing. A glycan (N-linked (GlcNAc...) asparagine) is linked at Asn81. The chain crosses the membrane as a helical span at residues Leu87 to Phe107. The Cytoplasmic segment spans residues Leu108–Arg109. A helical membrane pass occupies residues Phe110–Ile130. The Extracellular portion of the chain corresponds to Gly131 to Lys142. A helical transmembrane segment spans residues Ile143 to Val163. Over Leu164 to Thr190 the chain is Cytoplasmic. A helical transmembrane segment spans residues Ile191–Pro211. The Extracellular portion of the chain corresponds to Met212–Trp213. The chain crosses the membrane as a helical span at residues Ala214–Val234. Residues Cys235–Glu475 lie on the Cytoplasmic side of the membrane. A phosphoserine mark is found at Ser253, Ser256, Ser259, Ser268, Ser316, and Ser379. The segment at Pro275–Gly320 is disordered. The tract at residues Arg448 to Lys471 is disordered. Residues Val476–Gly496 form a helical membrane-spanning segment. The Extracellular segment spans residues Gly497–Ala523. A helical membrane pass occupies residues Ala524–Trp544. Topologically, residues Gly545–Gly564 are cytoplasmic. The chain crosses the membrane as a helical span at residues Phe565 to Ser579. Residues Asn580 to Ser586 are Extracellular-facing. The chain crosses the membrane as a helical span at residues Thr587 to Arg602. Residues Ser603–Asn614 lie on the Cytoplasmic side of the membrane. A helical membrane pass occupies residues Ile615–Ala635. Residues Leu636–Val645 are Extracellular-facing.

It belongs to the inorganic phosphate transporter (PiT) (TC 2.A.20) family. As to quaternary structure, homodimer.

It localises to the cell membrane. Its subcellular location is the apical cell membrane. The catalysed reaction is 2 Na(+)(out) + phosphate(out) = 2 Na(+)(in) + phosphate(in). Its function is as follows. Sodium-phosphate symporter which preferentially transports the monovalent form of phosphate with a stoichiometry of two sodium ions per phosphate ion. Plays a critical role in the determination of bone quality and strength by providing phosphate for bone mineralization. Required to maintain normal cerebrospinal fluid phosphate levels. Mediates phosphate-induced calcification of vascular smooth muscle cells (VCMCs) and can functionally compensate for loss of SLC20A1 in VCMCs. This Bos taurus (Bovine) protein is Sodium-dependent phosphate transporter 2 (SLC20A2).